The chain runs to 545 residues: Pectinesterase/pectinesterase inhibitor (545 aa).

The signal sequence occupies residues 1 to 37; sequence MEINQPNLLEASKSCYSKITFFLLVISFAALVSTGFS. A pectinesterase inhibitor region spans residues 38–191; that stretch reads SPELSLHHKI…ILRARTSLAI (154 aa). A propeptide spanning residues 38 to 228 is cleaved from the precursor; that stretch reads SPELSLHHKI…RRLLQTLGKD (191 aa). N-linked (GlcNAc...) asparagine glycosylation occurs at Asn135. The tract at residues 232–530 is pectinesterase; the sequence is DIVVAKDGSG…TVAELIQGGS (299 aa). Residues Thr307 and Gln337 each contribute to the substrate site. Cys326 and Cys353 form a disulfide bridge. Residue Asp360 is the Proton donor; for pectinesterase activity of the active site. Asn375 carries an N-linked (GlcNAc...) (complex) asparagine glycan. The active-site Nucleophile; for pectinesterase activity is Asp381. Cysteines 394 and 428 form a disulfide. Substrate is bound by residues Arg449 and Trp451.

The protein in the N-terminal section; belongs to the PMEI family. In the C-terminal section; belongs to the pectinesterase family. Post-translationally, N-glycosylated.

It is found in the secreted. It localises to the cell wall. It carries out the reaction [(1-&gt;4)-alpha-D-galacturonosyl methyl ester](n) + n H2O = [(1-&gt;4)-alpha-D-galacturonosyl](n) + n methanol + n H(+). Its pathway is glycan metabolism; pectin degradation; 2-dehydro-3-deoxy-D-gluconate from pectin: step 1/5. Functionally, acts in the modification of cell walls via demethylesterification of cell wall pectin. The chain is Pectinesterase/pectinesterase inhibitor from Ficus pumila var. awkeotsang (Jelly fig).